The primary structure comprises 613 residues: Dihydroxy-acid dehydratase (613 aa).

D81 is a Mg(2+) binding site. C122 contacts [2Fe-2S] cluster. Mg(2+) contacts are provided by D123 and K124. At K124 the chain carries N6-carboxylysine. C193 serves as a coordination point for [2Fe-2S] cluster. E489 contributes to the Mg(2+) binding site. S515 (proton acceptor) is an active-site residue.

Belongs to the IlvD/Edd family. As to quaternary structure, homodimer. [2Fe-2S] cluster serves as cofactor. Requires Mg(2+) as cofactor.

The catalysed reaction is (2R)-2,3-dihydroxy-3-methylbutanoate = 3-methyl-2-oxobutanoate + H2O. It carries out the reaction (2R,3R)-2,3-dihydroxy-3-methylpentanoate = (S)-3-methyl-2-oxopentanoate + H2O. Its pathway is amino-acid biosynthesis; L-isoleucine biosynthesis; L-isoleucine from 2-oxobutanoate: step 3/4. It functions in the pathway amino-acid biosynthesis; L-valine biosynthesis; L-valine from pyruvate: step 3/4. Functions in the biosynthesis of branched-chain amino acids. Catalyzes the dehydration of (2R,3R)-2,3-dihydroxy-3-methylpentanoate (2,3-dihydroxy-3-methylvalerate) into 2-oxo-3-methylpentanoate (2-oxo-3-methylvalerate) and of (2R)-2,3-dihydroxy-3-methylbutanoate (2,3-dihydroxyisovalerate) into 2-oxo-3-methylbutanoate (2-oxoisovalerate), the penultimate precursor to L-isoleucine and L-valine, respectively. The polypeptide is Dihydroxy-acid dehydratase (Pseudomonas fluorescens (strain SBW25)).